The primary structure comprises 212 residues: Pyridoxine/pyridoxamine 5'-phosphate oxidase (212 aa).

Residues 8-11 (RTNY) and K66 contribute to the substrate site. Residues 61–66 (RIVLLK), 76–77 (FT), K83, and Q105 each bind FMN. Y123, R127, and S131 together coordinate substrate. Residues 140-141 (QS) and W185 each bind FMN. 191-193 (RLH) serves as a coordination point for substrate. Position 195 (R195) interacts with FMN.

The protein belongs to the pyridoxamine 5'-phosphate oxidase family. In terms of assembly, homodimer. Requires FMN as cofactor.

It catalyses the reaction pyridoxamine 5'-phosphate + O2 + H2O = pyridoxal 5'-phosphate + H2O2 + NH4(+). It carries out the reaction pyridoxine 5'-phosphate + O2 = pyridoxal 5'-phosphate + H2O2. It functions in the pathway cofactor metabolism; pyridoxal 5'-phosphate salvage; pyridoxal 5'-phosphate from pyridoxamine 5'-phosphate: step 1/1. It participates in cofactor metabolism; pyridoxal 5'-phosphate salvage; pyridoxal 5'-phosphate from pyridoxine 5'-phosphate: step 1/1. Its function is as follows. Catalyzes the oxidation of either pyridoxine 5'-phosphate (PNP) or pyridoxamine 5'-phosphate (PMP) into pyridoxal 5'-phosphate (PLP). The chain is Pyridoxine/pyridoxamine 5'-phosphate oxidase from Leptospira biflexa serovar Patoc (strain Patoc 1 / Ames).